Here is a 419-residue protein sequence, read N- to C-terminus: Synaptosomal-associated protein 47 (419 aa).

T-SNARE coiled-coil homology domains follow at residues 109-171 (AANP…LTEL) and 356-418 (KDWP…MRKL).

This sequence belongs to the SVAP1 family. As to quaternary structure, associates with the BLOC-1 complex. Interacts with BLOC1S6. Forms a complex containing SNAP47, VAMP2 and STX1A.

It is found in the endomembrane system. It localises to the cytoplasm. The protein localises to the perinuclear region. Its function is as follows. May play a role in intracellular membrane fusion. The protein is Synaptosomal-associated protein 47 (Snap47) of Rattus norvegicus (Rat).